Consider the following 2286-residue polypeptide: Non-reducing polyketide synthase fsr1 (2286 aa).

Residues 7–342 form an N-terminal acylcarrier protein transacylase domain (SAT) region; it reads LYLFGDQTFD…IYTALKKTSL (336 aa). The region spanning 368–805 is the Ketosynthase family 3 (KS3) domain; that stretch reads KPKLAIVAMS…GGNSALLIQD (438 aa). Active-site for beta-ketoacyl synthase activity residues include C540, H675, and H722. An acyl/malonyl transferases region spans residues 905 to 1195; it reads VFTFTGQGAQ…GMVKPTLGQQ (291 aa). S996 functions as the For acyl/malonyl transferase activity in the catalytic mechanism. The tract at residues 1285 to 1417 is N-terminal hotdog fold; sequence HSVVEESGDS…CVVLFKDRSH (133 aa). The region spanning 1285-1591 is the PKS/mFAS DH domain; that stretch reads HSVVEESGDS…IQGVPRRVLK (307 aa). The segment at 1296–1588 is product template (PT) domainn; it reads KTGIVVEADI…QIAIQGVPRR (293 aa). Catalysis depends on H1317, which acts as the Proton acceptor; for dehydratase activity. Residues 1444–1591 form a C-terminal hotdog fold region; it reads SARFNRPMAY…IQGVPRRVLK (148 aa). D1504 acts as the Proton donor; for dehydratase activity in catalysis. Residues 1600-1639 form a disordered region; sequence KKGQPQRQTQDKPRNTPSQTKDSTPKPAQNKPAAKVEPPK. In terms of domain architecture, Carrier 1 spans 1637 to 1712; that stretch reads PPKFSTAIRI…DLRAFLGADE (76 aa). S1671 bears the O-(pantetheine 4'-phosphoryl)serine mark. Residues 1716 to 1735 are disordered; the sequence is ESSSSAASDSGRDTTTTGSA. Residues 1748-1823 form the Carrier 2 domain; it reads EVEFERALEI…DLKTMLAREM (76 aa). An O-(pantetheine 4'-phosphoryl)serine modification is found at S1782. Residues 1897–2145 are reductase (R) domain; sequence VTGASGGLGS…NWTPVNDIAD (249 aa).

The protein operates within polyketide biosynthesis. Non-reducing polyketide synthase; part of the gene cluster that mediates the biosynthesis of fusarubins, highly pigmented naphthoquinones responsible for the coloration of the fruiting bodies. The non-reducing polyketide synthase FSR1 is responsible for the condensation of seven acetyl-CoA units to yield a haptaketide. After rings A and B are formed by aldol-type cyclization, the PKS-derived product is released as 6-O-demethylfusarubinaldehyde. Then, two hydroxyl groups at C-5 and C-10 are incorporated by FSR3, and simultaneously hydroxyl groups at C-6 and C-8 are methylated by FSR2. The aldehyde is, on the one hand, reduced by FSR3 to 8-O-methylfusarubin alcohol, which equilibrates mainly with 8-O-methylfusarubin and only small amounts of 8-O-methylnectriafurone. On the other hand, the aldehyde can be oxidized to form 8-O-methylfusarubinic acid, a reaction driven by FSR3 equilibrating with 8-O-methylfusarubinlactone, finally resulting in 8-O-methylanhydrofusarubinlactol after a further reduction step and loss of water. 8-O-Methylfusarubinic acid can also undergo decarboxylation, resulting in 8-O-methyl-13-hydroxynorjavanicin after another hydroxylation step at C-13. Both steps are most likely also accomplished by FSR3. No enzymatic function has been determined so far for either FSR4 and FSR5. Their deletion does not alter the product spectrum, but the possibility that they catalyze specific enzymatic steps during perithecium development cannot be ruled out. FSR4 might possess a regulatory function in the biosynthesis of fusarubins. The chain is Non-reducing polyketide synthase fsr1 from Gibberella fujikuroi (strain CBS 195.34 / IMI 58289 / NRRL A-6831) (Bakanae and foot rot disease fungus).